The chain runs to 528 residues: Serine/threonine-protein kinase akt-2 (528 aa).

One can recognise a PH domain in the interval 12-115; that stretch reads DIVIESWLHK…WIEAIQAVSS (104 aa). The tract at residues 121-153 is disordered; it reads ENAGNTSMQEEDTNGNPSGESDVNMDATSTRSD. The span at 123–153 shows a compositional bias: polar residues; that stretch reads AGNTSMQEEDTNGNPSGESDVNMDATSTRSD. In terms of domain architecture, Protein kinase spans 180 to 437; sequence FDFLKVLGQG…AREVSRAEFF (258 aa). ATP is bound by residues 186 to 194 and Lys-209; that span reads LGQGTFGKV. The Proton acceptor role is filled by Asp-303. An AGC-kinase C-terminal domain is found at 438 to 515; that stretch reads KDVDWEATLR…YYVSGSLERS (78 aa).

Belongs to the protein kinase superfamily. AGC Ser/Thr protein kinase family. RAC subfamily. In terms of assembly, interacts with pdk-1, sgk-1, akt-1 and daf-16. Part of a complex containing sgk-1, akt-1 and akt-2. Requires Mg(2+) as cofactor. As to expression, expressed in neurons, muscle cells of the pharynx, rectal gland cells, and spermatheca.

It catalyses the reaction L-seryl-[protein] + ATP = O-phospho-L-seryl-[protein] + ADP + H(+). The catalysed reaction is L-threonyl-[protein] + ATP = O-phospho-L-threonyl-[protein] + ADP + H(+). Phosphorylated and activated by pdk-1. In terms of biological role, acts downstream of PI3 kinase age-1 and kinase pdk-1 in the daf-2/insulin receptor-like transduction pathway. Essential role in regulating developmental arrest at the dauer stage. Phosphorylates Forkhead-related daf-16 and the longevity-promoting skn-1 transcription factors, which inhibits their entry into the nucleus and antagonizes their functions. Role in immune function and pathogen resistance. Downstream of age-1 and together with akt-1 and sgk-1, promotes cell survival during embryonic development. Plays a role in maintaining the gonadal basement membrane through antagonizing akt-1 activity. The chain is Serine/threonine-protein kinase akt-2 from Caenorhabditis elegans.